The primary structure comprises 432 residues: Pachytene checkpoint protein 2 homolog (432 aa).

M1 carries the post-translational modification N-acetylmethionine. 179–186 (GPPGTGKT) serves as a coordination point for ATP.

The protein belongs to the AAA ATPase family. PCH2 subfamily. In terms of assembly, specifically interacts with the ligand binding domain of the thyroid receptor (TR). This interaction does not require the presence of thyroid hormone for its interaction. Interacts with proteasome subunit PSMA8; to participate in meiosis progression during spermatogenesis. As to expression, widely expressed, including in testis.

Its function is as follows. Plays a key role in chromosome recombination and chromosome structure development during meiosis. Required at early steps in meiotic recombination that leads to non-crossovers pathways. Also needed for efficient completion of homologous synapsis by influencing crossover distribution along the chromosomes affecting both crossovers and non-crossovers pathways. Also required for development of higher-order chromosome structures and is needed for synaptonemal-complex formation. In males, required for efficient synapsis of the sex chromosomes and for sex body formation. Promotes early steps of the DNA double-strand breaks (DSBs) repair process upstream of the assembly of RAD51 complexes. Required for depletion of HORMAD1 and HORMAD2 from synapsed chromosomes. Plays a role in mitotic spindle assembly checkpoint (SAC) activation. In Mus musculus (Mouse), this protein is Pachytene checkpoint protein 2 homolog (Trip13).